A 442-amino-acid polypeptide reads, in one-letter code: Phosphoglucosamine mutase (442 aa).

The active-site Phosphoserine intermediate is the Ser98. Residues Ser98, Asp236, Asp238, and Asp240 each coordinate Mg(2+). Ser98 carries the phosphoserine modification.

This sequence belongs to the phosphohexose mutase family. Mg(2+) is required as a cofactor. In terms of processing, activated by phosphorylation.

It catalyses the reaction alpha-D-glucosamine 1-phosphate = D-glucosamine 6-phosphate. In terms of biological role, catalyzes the conversion of glucosamine-6-phosphate to glucosamine-1-phosphate. The protein is Phosphoglucosamine mutase of Natranaerobius thermophilus (strain ATCC BAA-1301 / DSM 18059 / JW/NM-WN-LF).